Here is a 213-residue protein sequence, read N- to C-terminus: Imidazole glycerol phosphate synthase subunit HisH (213 aa).

The Glutamine amidotransferase type-1 domain occupies 4-211 (NLGLIDYGMG…LTWLRNGAEP (208 aa)). Cys-82 serves as the catalytic Nucleophile. Active-site residues include His-186 and Glu-188.

As to quaternary structure, heterodimer of HisH and HisF.

It is found in the cytoplasm. It carries out the reaction 5-[(5-phospho-1-deoxy-D-ribulos-1-ylimino)methylamino]-1-(5-phospho-beta-D-ribosyl)imidazole-4-carboxamide + L-glutamine = D-erythro-1-(imidazol-4-yl)glycerol 3-phosphate + 5-amino-1-(5-phospho-beta-D-ribosyl)imidazole-4-carboxamide + L-glutamate + H(+). It catalyses the reaction L-glutamine + H2O = L-glutamate + NH4(+). It functions in the pathway amino-acid biosynthesis; L-histidine biosynthesis; L-histidine from 5-phospho-alpha-D-ribose 1-diphosphate: step 5/9. Functionally, IGPS catalyzes the conversion of PRFAR and glutamine to IGP, AICAR and glutamate. The HisH subunit catalyzes the hydrolysis of glutamine to glutamate and ammonia as part of the synthesis of IGP and AICAR. The resulting ammonia molecule is channeled to the active site of HisF. This is Imidazole glycerol phosphate synthase subunit HisH from Synechococcus sp. (strain CC9605).